We begin with the raw amino-acid sequence, 426 residues long: MIDPKLLRNDLPMVVAALARRGFDFPEAEYQKLEDLRKASQVKSETLQAERNKLSQQIGKAKSKGEDCADLMAQAAQLESEQAAVEASFNETQKQLDTLLSSVPNLPDDSVPTGKDENDNPEIRRWGTPRTFDFTPKEHADLMQIGLDFTNGVKLAGARFTVLRGALSRLHRAIAQFMLDTHTEEHGYQEMSVPYLVNPQTIYGTGQLPKFEQDLFKTRLSDRDFYLIPTAEVSLTNLVAQEILEESVLPLQFVAHTPCFRSEAGSAGRDVRGMIRQHQFDKVELVHITTPEDSHAALERLTAHAERILQKLELPYRVILLCTGDMGFAARKTYDLEVWLPGQGKYREISSCSNCWDFQARRMQARFRAEGEKRPQLVHTLNGSGLAVGRTLVAILENYQQADGNILIPKALQPYMNGLDRITPSA.

Residues 103–129 form a disordered region; that stretch reads VPNLPDDSVPTGKDENDNPEIRRWGTP. Residues 114–125 are compositionally biased toward basic and acidic residues; sequence GKDENDNPEIRR. An L-serine-binding site is contributed by 230 to 232; sequence TAE. 261 to 263 contacts ATP; sequence RSE. Residue E284 participates in L-serine binding. 348-351 is a binding site for ATP; sequence EISS. S384 lines the L-serine pocket.

This sequence belongs to the class-II aminoacyl-tRNA synthetase family. Type-1 seryl-tRNA synthetase subfamily. As to quaternary structure, homodimer. The tRNA molecule binds across the dimer.

It is found in the cytoplasm. It catalyses the reaction tRNA(Ser) + L-serine + ATP = L-seryl-tRNA(Ser) + AMP + diphosphate + H(+). The enzyme catalyses tRNA(Sec) + L-serine + ATP = L-seryl-tRNA(Sec) + AMP + diphosphate + H(+). It functions in the pathway aminoacyl-tRNA biosynthesis; selenocysteinyl-tRNA(Sec) biosynthesis; L-seryl-tRNA(Sec) from L-serine and tRNA(Sec): step 1/1. In terms of biological role, catalyzes the attachment of serine to tRNA(Ser). Is also able to aminoacylate tRNA(Sec) with serine, to form the misacylated tRNA L-seryl-tRNA(Sec), which will be further converted into selenocysteinyl-tRNA(Sec). The polypeptide is Serine--tRNA ligase (Dichelobacter nodosus (strain VCS1703A)).